The chain runs to 308 residues: Methionyl-tRNA formyltransferase (308 aa).

S109–P112 contacts (6S)-5,6,7,8-tetrahydrofolate.

Belongs to the Fmt family.

It catalyses the reaction L-methionyl-tRNA(fMet) + (6R)-10-formyltetrahydrofolate = N-formyl-L-methionyl-tRNA(fMet) + (6S)-5,6,7,8-tetrahydrofolate + H(+). Functionally, attaches a formyl group to the free amino group of methionyl-tRNA(fMet). The formyl group appears to play a dual role in the initiator identity of N-formylmethionyl-tRNA by promoting its recognition by IF2 and preventing the misappropriation of this tRNA by the elongation apparatus. This Salinispora arenicola (strain CNS-205) protein is Methionyl-tRNA formyltransferase.